A 1381-amino-acid chain; its full sequence is DNA-directed RNA polymerase subunit beta'' (1381 aa).

Cys224, Cys296, Cys303, and Cys306 together coordinate Zn(2+).

It belongs to the RNA polymerase beta' chain family. RpoC2 subfamily. In terms of assembly, in plastids the minimal PEP RNA polymerase catalytic core is composed of four subunits: alpha, beta, beta', and beta''. When a (nuclear-encoded) sigma factor is associated with the core the holoenzyme is formed, which can initiate transcription. Zn(2+) serves as cofactor.

It is found in the plastid. Its subcellular location is the chloroplast. It carries out the reaction RNA(n) + a ribonucleoside 5'-triphosphate = RNA(n+1) + diphosphate. DNA-dependent RNA polymerase catalyzes the transcription of DNA into RNA using the four ribonucleoside triphosphates as substrates. The polypeptide is DNA-directed RNA polymerase subunit beta'' (Drimys granadensis).